Consider the following 541-residue polypeptide: Arginine-containing cyclodipeptide synthase avaA (541 aa).

Residues 428–432 carry the Conserved DDXXE motif motif; that stretch reads DDIAE.

It belongs to the arginine-containing cyclodipeptide synthase family.

It carries out the reaction L-tryptophyl-tRNA(Trp) + L-arginyl-tRNA(Arg) = cyclo(L-arginyl-L-tryptophyl) + tRNA(Trp) + tRNA(Arg) + H(+). It functions in the pathway secondary metabolite biosynthesis. Arginine-containing cyclodipeptide synthase; part of the cluster that mediates the biosynthesis of a highly modified cyclo-arginine-tryptophan dipeptide (cRW). Within the pathway, avaA acts as the scaffold-generating enzyme and is responsible for formation of the cyclo-Arg-Trp diketopiperazine (cRW) from L-arginyl-tRNA(Arg) + L-tryptophanyl-tRNA(Trp). AvaB then acts as a multifunctional flavoenzyme that is responsible for generating the cyclo-Arg-formylkynurenine DKP, which can be deformylated by avaC. AvaB then catalyzes an additional N-oxidation followed by cyclization and dehydration. The next step is an N-acetylation of the guanidine group catalyzed by the arginine N-acetyltransferase AvaD. The role of the additional enzymes identified within the ava cluster still have to be determined. This Aspergillus versicolor protein is Arginine-containing cyclodipeptide synthase avaA.